Consider the following 603-residue polypeptide: uncharacterized protein (603 aa).

One can recognise a PE domain in the interval 1–93; that stretch reads MSFVIAAPET…AGAYASAEAA (93 aa). Residues 309-333 form a disordered region; it reads GIFTGNGGTGGTGGTGTGNQLVGGE.

The protein belongs to the mycobacterial PE family. PGRS subfamily.

This is an uncharacterized protein from Mycobacterium tuberculosis (strain CDC 1551 / Oshkosh).